The following is a 269-amino-acid chain: Elongation factor Ts (269 aa).

The interval 76 to 79 (TDFV) is involved in Mg(2+) ion dislocation from EF-Tu.

Belongs to the EF-Ts family.

The protein localises to the cytoplasm. In terms of biological role, associates with the EF-Tu.GDP complex and induces the exchange of GDP to GTP. It remains bound to the aminoacyl-tRNA.EF-Tu.GTP complex up to the GTP hydrolysis stage on the ribosome. In Deinococcus geothermalis (strain DSM 11300 / CIP 105573 / AG-3a), this protein is Elongation factor Ts.